The following is a 302-amino-acid chain: Probable alpha-L-glutamate ligase (302 aa).

In terms of domain architecture, ATP-grasp spans 105–288 (LQLLARKGIP…LAGKIIEYIE (184 aa)). ATP-binding positions include Lys-142, 179–180 (EF), Asp-188, and 212–214 (RAN). The Mg(2+) site is built by Asp-249, Glu-261, and Asn-263. Residues Asp-249, Glu-261, and Asn-263 each coordinate Mn(2+).

This sequence belongs to the RimK family. It depends on Mg(2+) as a cofactor. The cofactor is Mn(2+).

This is Probable alpha-L-glutamate ligase from Legionella pneumophila (strain Paris).